Here is a 429-residue protein sequence, read N- to C-terminus: Hydrogenobyrinate a,c-diamide synthase (429 aa).

The GATase cobBQ-type domain occupies 240–429; it reads RTAVARDVAF…SFMHLIDFSE (190 aa). Cys323 acts as the Nucleophile in catalysis.

It belongs to the CobB/CbiA family. Requires Mg(2+) as cofactor.

It catalyses the reaction hydrogenobyrinate + 2 L-glutamine + 2 ATP + 2 H2O = hydrogenobyrinate a,c-diamide + 2 L-glutamate + 2 ADP + 2 phosphate + 2 H(+). It functions in the pathway cofactor biosynthesis; adenosylcobalamin biosynthesis; cob(II)yrinate a,c-diamide from precorrin-2 (aerobic route): step 9/10. Functionally, catalyzes the ATP-dependent amidation of the two carboxylate groups at positions a and c of hydrogenobyrinate, using either L-glutamine or ammonia as the nitrogen source. The protein is Hydrogenobyrinate a,c-diamide synthase of Rhizobium meliloti (strain 1021) (Ensifer meliloti).